The chain runs to 235 residues: Serine protease SplA (235 aa).

The signal sequence occupies residues 1–35 (MNKNVMVKGLTALTILTSLGFAENISNQPHSIAKA). Residues H74, D113, and S189 each act as charge relay system in the active site.

Belongs to the peptidase S1B family.

Its subcellular location is the secreted. The sequence is that of Serine protease SplA (splA) from Staphylococcus aureus (strain Mu3 / ATCC 700698).